Consider the following 61-residue polypeptide: U-stichotoxin-Hcr1b (61 aa).

The N-terminal stretch at 1-19 is a signal peptide; the sequence is PILIFAFVMFAVMVNAKPS. A propeptide spanning residues 20–31 is cleaved from the precursor; it reads IDDAEMKREPKP. 2 disulfide bridges follow: C38–C49 and C41–C56.

The protein belongs to the Hau1a/HC18/HC19 family.

It is found in the secreted. It localises to the nematocyst. Its function is as follows. Toxin that is lethal to crab. Does not produce the typical symptoms associated with sodium channel toxins in crabs, suggesting that it likely does not act on sodium channels. The protein is U-stichotoxin-Hcr1b of Radianthus crispa (Leathery sea anemone).